The primary structure comprises 293 residues: Ribosomal protein L11 methyltransferase (293 aa).

Positions 145, 166, 188, and 230 each coordinate S-adenosyl-L-methionine.

It belongs to the methyltransferase superfamily. PrmA family.

Its subcellular location is the cytoplasm. It catalyses the reaction L-lysyl-[protein] + 3 S-adenosyl-L-methionine = N(6),N(6),N(6)-trimethyl-L-lysyl-[protein] + 3 S-adenosyl-L-homocysteine + 3 H(+). Methylates ribosomal protein L11. This is Ribosomal protein L11 methyltransferase from Shewanella pealeana (strain ATCC 700345 / ANG-SQ1).